The sequence spans 342 residues: Cyclin-dependent kinase-like 4 (342 aa).

A Protein kinase domain is found at 4–286; the sequence is YEKLAKIGEG…CAQLLDSAYF (283 aa). Residues 10 to 18 and K33 contribute to the ATP site; that span reads IGEGSYGVV. The [NKR]KIAxRE motif lies at 45 to 51; sequence RKIALRE. D126 acts as the Proton acceptor in catalysis. The disordered stretch occupies residues 295-328; it reads KRKARSEGRSRRRQQNQLLPLIPGSHISPTPDGR.

The protein belongs to the protein kinase superfamily. CMGC Ser/Thr protein kinase family. CDC2/CDKX subfamily.

The protein resides in the cytoplasm. The enzyme catalyses L-seryl-[protein] + ATP = O-phospho-L-seryl-[protein] + ADP + H(+). The catalysed reaction is L-threonyl-[protein] + ATP = O-phospho-L-threonyl-[protein] + ADP + H(+). The protein is Cyclin-dependent kinase-like 4 (Cdkl4) of Mus musculus (Mouse).